A 57-amino-acid polypeptide reads, in one-letter code: uncharacterized protein (57 aa).

This is an uncharacterized protein from Archaeoglobus fulgidus (strain ATCC 49558 / DSM 4304 / JCM 9628 / NBRC 100126 / VC-16).